The chain runs to 631 residues: RNA polymerase sigma factor RpoD (631 aa).

Positions 395–465 (LIKANLRLVV…TRSISDQART (71 aa)) are sigma-70 factor domain-2. The Interaction with polymerase core subunit RpoC signature appears at 419-422 (DLVQ). A sigma-70 factor domain-3 region spans residues 474–550 (EQINRLNRET…DKAIKNPANH (77 aa)). The segment at 563–616 (ILGTLPEREQEVVKMRFGLEDGYSLTLEEVGLHFNVTRERIRQIESKALRRLKN) is sigma-70 factor domain-4. The segment at residues 589-608 (LEEVGLHFNVTRERIRQIES) is a DNA-binding region (H-T-H motif).

This sequence belongs to the sigma-70 factor family. RpoD/SigA subfamily. Interacts transiently with the RNA polymerase catalytic core.

It localises to the cytoplasm. Its function is as follows. Sigma factors are initiation factors that promote the attachment of RNA polymerase to specific initiation sites and are then released. This sigma factor is the primary sigma factor during exponential growth. The chain is RNA polymerase sigma factor RpoD from Borreliella burgdorferi (strain ATCC 35210 / DSM 4680 / CIP 102532 / B31) (Borrelia burgdorferi).